Consider the following 454-residue polypeptide: (Z)-3-hexen-1-ol acetyltransferase (454 aa).

Residues H174 and D389 each act as proton acceptor in the active site.

It belongs to the plant acyltransferase family. In terms of tissue distribution, expressed in leaves and stems. Lower levels in flowers and barely detected in roots and siliques.

The catalysed reaction is (3Z)-hex-3-en-1-ol + acetyl-CoA = (3Z)-hex-3-en-1-yl acetate + CoA. Its activity is regulated as follows. Inhibited by magnesium, calcium, cobalt, zinc and copper. In terms of biological role, acyltransferase involved in the production of green leaf volatiles (GLVs). Uses acetyl-CoA as substrate, but not malonyl-CoA or benzoyl-CoA. Prefers primary, medium-chain-length, aliphatic alcohols. This Arabidopsis thaliana (Mouse-ear cress) protein is (Z)-3-hexen-1-ol acetyltransferase (CHAT).